The primary structure comprises 505 residues: Calcium/calmodulin-dependent protein kinase kinase 1 (505 aa).

The interval 26-61 is disordered; that stretch reads THLEEADGGPEPTRNGVDPPPRARAASVIPGSTSRL. Phosphoserine occurs at positions 67 and 74. Arginine 78 is subject to Asymmetric dimethylarginine. Serine 100 is subject to Phosphoserine. Threonine 108 carries the phosphothreonine modification. The Protein kinase domain occupies 128–409; that stretch reads YKLQSEIGKG…VPDIKLHPWV (282 aa). Residues 134–142 and lysine 157 contribute to the ATP site; that span reads IGKGAYGVV. An RP domain region spans residues 167-189; that stretch reads QYGFPRRPPPRGSQAAQGGPAKQ. The active-site Proton acceptor is aspartate 275. The segment at 435-440 is autoinhibitory domain; sequence KNSVRL. A calmodulin-binding region spans residues 438-463; it reads VRLIPSWTTVILVKSMLRKRSFGNPF. Residues serine 458, serine 475, and serine 492 each carry the phosphoserine modification. Residues 460–505 form a disordered region; it reads GNPFEPQARREERSMSAPGNLLVKEGFGEGGKSPELPGVQEDEAAS.

The protein belongs to the protein kinase superfamily. Ser/Thr protein kinase family. In terms of assembly, interacts with CAMK4 and calmodulin. Post-translationally, appears to be autophosphorylated in a Ca(2+)/calmodulin-dependent manner. Phosphorylated at multiple sites by PRCAKA/PKA. Phosphorylation of Ser-458 is blocked upon binding to Ca(2+)/calmodulin. In vitro, phosphorylated by CAMK1 and CAMK4.

Its subcellular location is the cytoplasm. The protein resides in the nucleus. The catalysed reaction is L-seryl-[protein] + ATP = O-phospho-L-seryl-[protein] + ADP + H(+). It carries out the reaction L-threonyl-[protein] + ATP = O-phospho-L-threonyl-[protein] + ADP + H(+). Its activity is regulated as follows. Activated by Ca(2+)/calmodulin. Binding of calmodulin may relieve intrasteric autoinhibition. Partially inhibited upon phosphorylation by PRCAKA/PKA. May be regulated through phosphorylation by CAMK1 and CAMK4. Calcium/calmodulin-dependent protein kinase that belongs to a proposed calcium-triggered signaling cascade involved in a number of cellular processes. Phosphorylates CAMK1, CAMK1D, CAMK1G and CAMK4. Involved in regulating cell apoptosis. Promotes cell survival by phosphorylating AKT1/PKB that inhibits pro-apoptotic BAD/Bcl2-antagonist of cell death. This is Calcium/calmodulin-dependent protein kinase kinase 1 (CAMKK1) from Homo sapiens (Human).